A 317-amino-acid polypeptide reads, in one-letter code: MPADTRPAAIVLMGPTASGKSQLAIDIAKRWGGEVISVDSVLVYRGLDIGTAKPNAAMRASVPHHLIDICEPWETYSAADFAHDARAAIDMIVRRGALPILTGGTGLYFRALLAGLSDMPPAHPEIRAMITAEAKRDSWATLHTRLAEVDAITAARIHATDPQRIQRALEVYRVSGRSMSDWQKQPLKQRLPLRVLKLVLAPTHRKVLHFRIAQRFKAMLDNGLLAEVNALRTHPSIHAMARPLNLPAMRAVGYRQCWEHLDNMYTAETLYQRGVAATRQLAKRQLTWLRGELDALWFDPEHDQSRIEKVVEAFLNR.

Residue 14 to 21 (GPTASGKS) participates in ATP binding. 16–21 (TASGKS) is a binding site for substrate. 2 interaction with substrate tRNA regions span residues 39 to 42 (DSVL) and 163 to 167 (QRIQR).

This sequence belongs to the IPP transferase family. In terms of assembly, monomer. Mg(2+) is required as a cofactor.

The enzyme catalyses adenosine(37) in tRNA + dimethylallyl diphosphate = N(6)-dimethylallyladenosine(37) in tRNA + diphosphate. In terms of biological role, catalyzes the transfer of a dimethylallyl group onto the adenine at position 37 in tRNAs that read codons beginning with uridine, leading to the formation of N6-(dimethylallyl)adenosine (i(6)A). The protein is tRNA dimethylallyltransferase of Xylella fastidiosa (strain 9a5c).